The chain runs to 115 residues: Tyrosine-protein phosphatase 23 (115 aa).

Residues 1-115 (WMMIVEQKCR…EIGGDAPMVV (115 aa)) form the Tyrosine-protein phosphatase domain. Substrate is bound at residue aspartate 83.

It belongs to the protein-tyrosine phosphatase family.

The catalysed reaction is O-phospho-L-tyrosyl-[protein] + H2O = L-tyrosyl-[protein] + phosphate. The chain is Tyrosine-protein phosphatase 23 (STY-23) from Styela plicata (Wrinkled sea squirt).